We begin with the raw amino-acid sequence, 799 residues long: Protein scabrous (799 aa).

The signal sequence occupies residues 1–51 (MRDWQTFPDLQKKKVSRDHLNCPATMAGSNVLWPILLAVVLLQISVAFVSG). The interval 287–316 (TRKDGSSASVEEESGSQEANQEQTGLETTA) is disordered. N372 carries an N-linked (GlcNAc...) asparagine glycan. Positions 489–498 (LNKPHKRPHH) are enriched in basic residues. The interval 489-509 (LNKPHKRPHHQNVQAQMPQDD) is disordered. The region spanning 533 to 737 (AIINKLPHDC…SSRMLVKRLP (205 aa)) is the Fibrinogen C-terminal domain. C542 and C568 are disulfide-bonded. N-linked (GlcNAc...) asparagine glycans are attached at residues N587, N618, and N660. C687 and C700 are disulfide-bonded. N-linked (GlcNAc...) asparagine glycans are attached at residues N744 and N787.

Possesses five pairs of dibasic residues that may be the target of proteolytic processing.

It is found in the late endosome. Involved in regulation of neurogenesis. May encode a lateral inhibitor of R8 differentiation. In conjunction with Gp150, promotes Notch activation in response to Delta by regulating acquisition of insensitivity to Delta in a subset of cells. The polypeptide is Protein scabrous (sca) (Drosophila melanogaster (Fruit fly)).